Here is a 338-residue protein sequence, read N- to C-terminus: Ketol-acid reductoisomerase (NADP(+)) (338 aa).

Residues 1–181 (MKIYYDKDCN…GGGRAGIIET (181 aa)) form the KARI N-terminal Rossmann domain. Residues 24-27 (YGSQ), arginine 47, serine 50, serine 52, and 82-85 (DETQ) each bind NADP(+). Residue histidine 107 is part of the active site. Residue glycine 133 participates in NADP(+) binding. The 146-residue stretch at 182–327 (SFKEETETDL…ARLRSMMSWI (146 aa)) folds into the KARI C-terminal knotted domain. 4 residues coordinate Mg(2+): aspartate 190, glutamate 194, glutamate 226, and glutamate 230. A substrate-binding site is contributed by serine 251.

The protein belongs to the ketol-acid reductoisomerase family. The cofactor is Mg(2+).

It carries out the reaction (2R)-2,3-dihydroxy-3-methylbutanoate + NADP(+) = (2S)-2-acetolactate + NADPH + H(+). It catalyses the reaction (2R,3R)-2,3-dihydroxy-3-methylpentanoate + NADP(+) = (S)-2-ethyl-2-hydroxy-3-oxobutanoate + NADPH + H(+). It participates in amino-acid biosynthesis; L-isoleucine biosynthesis; L-isoleucine from 2-oxobutanoate: step 2/4. Its pathway is amino-acid biosynthesis; L-valine biosynthesis; L-valine from pyruvate: step 2/4. Involved in the biosynthesis of branched-chain amino acids (BCAA). Catalyzes an alkyl-migration followed by a ketol-acid reduction of (S)-2-acetolactate (S2AL) to yield (R)-2,3-dihydroxy-isovalerate. In the isomerase reaction, S2AL is rearranged via a Mg-dependent methyl migration to produce 3-hydroxy-3-methyl-2-ketobutyrate (HMKB). In the reductase reaction, this 2-ketoacid undergoes a metal-dependent reduction by NADPH to yield (R)-2,3-dihydroxy-isovalerate. The chain is Ketol-acid reductoisomerase (NADP(+)) from Geobacter metallireducens (strain ATCC 53774 / DSM 7210 / GS-15).